Consider the following 562-residue polypeptide: MLACLPGPGDLSLQLLSHTQMNTGLQKWDTTQKMRTAHYPTPAELDAYAKKVANNPLTIKIFPNSVKVPQRKHVRRTVNGLDTSAQRYSPYPTQAATKAGLLAIVKVPAKSILKDFDGTRARFLPEAIMNPPVAPYATVAPSTLAHPQAQALARQQALQHAQTLAHAPPQTLQHPQGIPPPQALSHPQSLQQPQGLGHPQQMAQTQGLVHPQALTHQGLQHPPNPLLHGGRKMPDSDAPPNVTVSTSTIPLSMAATLQHSQPPDLSSIVHQINQFCQTRAGISTTSVCEGQIANPSPISRSLLINASTRVSTHSVPTPMPSCVVNPMEHTHAATAALPAAGPVNLPTGISRAPTGYPSDLKPVTWNQHQLAHLQQMCSEAGGTPAPGLTGKHTAGRELAGPGFVGKAAAYPQELCLAQSFHLKPPLEKPTPSPPVNGLPAPLAYPNGHYFQPLWNNILPTPNSDSSGSQDLTMPFHGGQPTGAPLDCGAAPGAHYRAGTGGGPVASQNSLMQTVDYLSGDFQQACFREQSLAMLSKAHRAPGTRAPDPTDSRSLHIQHPGYR.

Low complexity-rich tracts occupy residues 147–167 (PQAQ…LAHA) and 183–201 (ALSH…HPQQ). Disordered regions lie at residues 147–242 (PQAQ…PPNV) and 537–562 (AHRA…PGYR).

This sequence belongs to the FAM222 family.

In Mus musculus (Mouse), this protein is Protein FAM222B (Fam222b).